The primary structure comprises 384 residues: 8-amino-7-oxononanoate synthase (384 aa).

Residue R21 coordinates substrate. 108–109 (GF) contributes to the pyridoxal 5'-phosphate binding site. H133 provides a ligand contact to substrate. Pyridoxal 5'-phosphate contacts are provided by S179, H207, and T233. K236 bears the N6-(pyridoxal phosphate)lysine mark. A substrate-binding site is contributed by T352.

It belongs to the class-II pyridoxal-phosphate-dependent aminotransferase family. BioF subfamily. In terms of assembly, homodimer. Pyridoxal 5'-phosphate serves as cofactor.

It catalyses the reaction 6-carboxyhexanoyl-[ACP] + L-alanine + H(+) = (8S)-8-amino-7-oxononanoate + holo-[ACP] + CO2. It functions in the pathway cofactor biosynthesis; biotin biosynthesis. Catalyzes the decarboxylative condensation of pimeloyl-[acyl-carrier protein] and L-alanine to produce 8-amino-7-oxononanoate (AON), [acyl-carrier protein], and carbon dioxide. The chain is 8-amino-7-oxononanoate synthase from Escherichia coli O9:H4 (strain HS).